A 170-amino-acid polypeptide reads, in one-letter code: 4-hydroxyphenylacetate 3-monooxygenase reductase component (170 aa).

Belongs to the non-flavoprotein flavin reductase family. HpaC subfamily. As to quaternary structure, homodimer. 4-HPA 3-monooxygenase consists of a reductase component HpaC and an oxygenase component HpaB.

The catalysed reaction is a reduced flavin + NAD(+) = an oxidized flavin + NADH + 2 H(+). It functions in the pathway aromatic compound metabolism; 4-hydroxyphenylacetate degradation; pyruvate and succinate semialdehyde from 4-hydroxyphenylacetate: step 1/7. In terms of biological role, catalyzes the reduction of free flavins (FMN, FAD and riboflavin) by NADH. Subsequently, the reduced flavins diffuse to the large HpaB component or to other electron acceptors such as cytochrome c and Fe(3+) ion. The sequence is that of 4-hydroxyphenylacetate 3-monooxygenase reductase component (hpaC) from Escherichia coli.